Reading from the N-terminus, the 638-residue chain is 1-deoxy-D-xylulose-5-phosphate synthase (638 aa).

Residues H79 and 120–122 (AHS) each bind thiamine diphosphate. D151 contacts Mg(2+). Thiamine diphosphate is bound by residues 152 to 153 (GA), N180, Y289, and E371. N180 serves as a coordination point for Mg(2+).

It belongs to the transketolase family. DXPS subfamily. As to quaternary structure, homodimer. Mg(2+) is required as a cofactor. Thiamine diphosphate serves as cofactor.

It catalyses the reaction D-glyceraldehyde 3-phosphate + pyruvate + H(+) = 1-deoxy-D-xylulose 5-phosphate + CO2. Its pathway is metabolic intermediate biosynthesis; 1-deoxy-D-xylulose 5-phosphate biosynthesis; 1-deoxy-D-xylulose 5-phosphate from D-glyceraldehyde 3-phosphate and pyruvate: step 1/1. Its function is as follows. Catalyzes the acyloin condensation reaction between C atoms 2 and 3 of pyruvate and glyceraldehyde 3-phosphate to yield 1-deoxy-D-xylulose-5-phosphate (DXP). This is 1-deoxy-D-xylulose-5-phosphate synthase from Rhizobium johnstonii (strain DSM 114642 / LMG 32736 / 3841) (Rhizobium leguminosarum bv. viciae).